A 335-amino-acid chain; its full sequence is Ketol-acid reductoisomerase (NADP(+)) (335 aa).

The region spanning 1–182 is the KARI N-terminal Rossmann domain; sequence MATIIYDNET…GATRAGVYET (182 aa). Residues 25 to 28, Arg48, Ser51, Ser53, and 83 to 86 contribute to the NADP(+) site; these read YGSQ and DEKQ. Residue His108 is part of the active site. Gly134 provides a ligand contact to NADP(+). Positions 183–328 constitute a KARI C-terminal knotted domain; it reads TFREETETDL…KEIRANIPWL (146 aa). Mg(2+) contacts are provided by Asp191, Glu195, Glu227, and Glu231. Substrate is bound at residue Ser252.

The protein belongs to the ketol-acid reductoisomerase family. Requires Mg(2+) as cofactor.

The catalysed reaction is (2R)-2,3-dihydroxy-3-methylbutanoate + NADP(+) = (2S)-2-acetolactate + NADPH + H(+). It carries out the reaction (2R,3R)-2,3-dihydroxy-3-methylpentanoate + NADP(+) = (S)-2-ethyl-2-hydroxy-3-oxobutanoate + NADPH + H(+). It participates in amino-acid biosynthesis; L-isoleucine biosynthesis; L-isoleucine from 2-oxobutanoate: step 2/4. It functions in the pathway amino-acid biosynthesis; L-valine biosynthesis; L-valine from pyruvate: step 2/4. In terms of biological role, involved in the biosynthesis of branched-chain amino acids (BCAA). Catalyzes an alkyl-migration followed by a ketol-acid reduction of (S)-2-acetolactate (S2AL) to yield (R)-2,3-dihydroxy-isovalerate. In the isomerase reaction, S2AL is rearranged via a Mg-dependent methyl migration to produce 3-hydroxy-3-methyl-2-ketobutyrate (HMKB). In the reductase reaction, this 2-ketoacid undergoes a metal-dependent reduction by NADPH to yield (R)-2,3-dihydroxy-isovalerate. The protein is Ketol-acid reductoisomerase (NADP(+)) of Methanosarcina acetivorans (strain ATCC 35395 / DSM 2834 / JCM 12185 / C2A).